Reading from the N-terminus, the 310-residue chain is Homoserine kinase (310 aa).

91–101 contacts ATP; the sequence is PIGSGLGSSAC.

It belongs to the GHMP kinase family. Homoserine kinase subfamily.

Its subcellular location is the cytoplasm. The enzyme catalyses L-homoserine + ATP = O-phospho-L-homoserine + ADP + H(+). It participates in amino-acid biosynthesis; L-threonine biosynthesis; L-threonine from L-aspartate: step 4/5. In terms of biological role, catalyzes the ATP-dependent phosphorylation of L-homoserine to L-homoserine phosphate. The chain is Homoserine kinase from Sodalis glossinidius (strain morsitans).